Here is a 77-residue protein sequence, read N- to C-terminus: Large ribosomal subunit protein bL28 (77 aa).

The segment at 1–26 is disordered; it reads MARVCKVTGKRPMSGNNVSHANNKTK.

This sequence belongs to the bacterial ribosomal protein bL28 family.

This Neisseria gonorrhoeae (strain ATCC 700825 / FA 1090) protein is Large ribosomal subunit protein bL28.